A 149-amino-acid chain; its full sequence is Large-conductance mechanosensitive channel (149 aa).

3 consecutive transmembrane segments (helical) span residues 10 to 30, 41 to 61, and 87 to 107; these read FALK…GAFA, IMPI…MFLI, and GSFI…FMMV.

Belongs to the MscL family. As to quaternary structure, homopentamer.

The protein localises to the cell inner membrane. Its function is as follows. Channel that opens in response to stretch forces in the membrane lipid bilayer. May participate in the regulation of osmotic pressure changes within the cell. This is Large-conductance mechanosensitive channel from Psychrobacter cryohalolentis (strain ATCC BAA-1226 / DSM 17306 / VKM B-2378 / K5).